Reading from the N-terminus, the 283-residue chain is Homeobox protein Hox-A9a (283 aa).

Disordered stretches follow at residues 25-54 (VPRYSAGPGHQHSRQPASIGDPHSELGTCS) and 162-181 (EKDAVSSHTGDGVDTEEKPG). Positions 216–275 (TRKKRCPYTKHQILELEKEFLFNTYLTRDRRYEVARLLNLTERQVKIWFQNRRMKMKKFN) form a DNA-binding region, homeobox.

Belongs to the Abd-B homeobox family.

It localises to the nucleus. Sequence-specific transcription factor which is part of a developmental regulatory system that provides cells with specific positional identities on the anterior-posterior axis. The protein is Homeobox protein Hox-A9a (hoxa9a) of Takifugu rubripes (Japanese pufferfish).